Reading from the N-terminus, the 331-residue chain is Ketol-acid reductoisomerase (NADP(+)) (331 aa).

In terms of domain architecture, KARI N-terminal Rossmann spans 2–182 (ARMYYDEDAN…GGTRAGVLET (181 aa)). NADP(+)-binding positions include 25-28 (YGSQ), S51, S53, and 83-86 (DEVQ). Residue H108 is part of the active site. Position 134 (G134) interacts with NADP(+). Positions 183–328 (TFREETETDL…KDLRAMFSWL (146 aa)) constitute a KARI C-terminal knotted domain. D191, E195, E227, and E231 together coordinate Mg(2+). Position 252 (S252) interacts with substrate.

This sequence belongs to the ketol-acid reductoisomerase family. The cofactor is Mg(2+).

It carries out the reaction (2R)-2,3-dihydroxy-3-methylbutanoate + NADP(+) = (2S)-2-acetolactate + NADPH + H(+). The catalysed reaction is (2R,3R)-2,3-dihydroxy-3-methylpentanoate + NADP(+) = (S)-2-ethyl-2-hydroxy-3-oxobutanoate + NADPH + H(+). The protein operates within amino-acid biosynthesis; L-isoleucine biosynthesis; L-isoleucine from 2-oxobutanoate: step 2/4. It participates in amino-acid biosynthesis; L-valine biosynthesis; L-valine from pyruvate: step 2/4. Its function is as follows. Involved in the biosynthesis of branched-chain amino acids (BCAA). Catalyzes an alkyl-migration followed by a ketol-acid reduction of (S)-2-acetolactate (S2AL) to yield (R)-2,3-dihydroxy-isovalerate. In the isomerase reaction, S2AL is rearranged via a Mg-dependent methyl migration to produce 3-hydroxy-3-methyl-2-ketobutyrate (HMKB). In the reductase reaction, this 2-ketoacid undergoes a metal-dependent reduction by NADPH to yield (R)-2,3-dihydroxy-isovalerate. The protein is Ketol-acid reductoisomerase (NADP(+)) of Nostoc punctiforme (strain ATCC 29133 / PCC 73102).